Here is a 151-residue protein sequence, read N- to C-terminus: MFDIGFLELLICGVIALLVLGPERLPTAARAAGRWIGGARRMVSQFTSELDRQLKAEELREELRKAGDVGLDDVEKTVRGALDEAKKYEHMILPDDQTRKPRPAPATRRVTPPSPEAGEQPEPPHEPVRDEAAASDQPSDSSPTSPSDKYS.

The chain crosses the membrane as a helical span at residues 1–21 (MFDIGFLELLICGVIALLVLG). 2 stretches are compositionally biased toward basic and acidic residues: residues 87–99 (KYEH…DQTR) and 122–132 (EPPHEPVRDEA). The disordered stretch occupies residues 87–151 (KYEHMILPDD…SPTSPSDKYS (65 aa)). Over residues 134–151 (ASDQPSDSSPTSPSDKYS) the composition is skewed to low complexity.

This sequence belongs to the TatB family. In terms of assembly, the Tat system comprises two distinct complexes: a TatABC complex, containing multiple copies of TatA, TatB and TatC subunits, and a separate TatA complex, containing only TatA subunits. Substrates initially bind to the TatABC complex, which probably triggers association of the separate TatA complex to form the active translocon.

Its subcellular location is the cell inner membrane. Part of the twin-arginine translocation (Tat) system that transports large folded proteins containing a characteristic twin-arginine motif in their signal peptide across membranes. Together with TatC, TatB is part of a receptor directly interacting with Tat signal peptides. TatB may form an oligomeric binding site that transiently accommodates folded Tat precursor proteins before their translocation. The protein is Sec-independent protein translocase protein TatB of Marinobacter nauticus (strain ATCC 700491 / DSM 11845 / VT8) (Marinobacter aquaeolei).